Reading from the N-terminus, the 312-residue chain is Apolipoprotein E (312 aa).

A signal peptide spans 1–18 (MKALWAVLLATLLTGCLA). A run of 8 repeats spans residues 72-93 (VLME…EQLG), 94-115 (PVAE…ARLG), 116-137 (ADME…TMLG), 138-159 (QNTE…KRLM), 160-181 (RDAE…EGAE), 182-203 (RGVS…QRTA), 204-225 (NLGA…ERLR), and 226-247 (GRLE…EHME). The tract at residues 72-247 (VLMEDTMTEV…RLEEMREHME (176 aa)) is 8 X 22 AA approximate tandem repeats. Methionine 135 carries the post-translational modification Methionine sulfoxide. Positions 150-160 (HLRKMRKRLMR) are LDL and other lipoprotein receptors binding. The segment at 150–160 (HLRKMRKRLMR) is LDL receptor binding. 154–157 (MRKR) serves as a coordination point for heparin. Positions 202–282 (TANLGAGAAQ…SWFEPLVEDM (81 aa)) are lipid-binding and lipoprotein association. A heparin-binding site is contributed by 221 to 228 (SERLRGRL). The tract at residues 258–312 (QQIRLQAEIFQARLKSWFEPLVEDMHRQLANLVEKIQSSVATNSVLSTSVPQENQ) is homooligomerization. Residues 270-282 (RLKSWFEPLVEDM) form a specificity for association with VLDL region.

The protein belongs to the apolipoprotein A1/A4/E family. In terms of assembly, homotetramer. May interact with ABCA1; functionally associated with ABCA1 in the biogenesis of HDLs. May interact with APP/A4 amyloid-beta peptide; the interaction is extremely stable in vitro but its physiological significance is unclear. May interact with MAPT. May interact with MAP2. In the cerebrospinal fluid, interacts with secreted SORL1. Interacts with PMEL; this allows the loading of PMEL luminal fragment on ILVs to induce fibril nucleation. APOE exists as multiple glycosylated and sialylated glycoforms within cells and in plasma. The extent of glycosylation and sialylation are tissue and context specific. Post-translationally, glycated in plasma VLDL. In terms of processing, phosphorylated by FAM20C in the extracellular medium.

The protein resides in the secreted. It localises to the extracellular space. It is found in the extracellular matrix. Its subcellular location is the extracellular vesicle. The protein localises to the endosome. The protein resides in the multivesicular body. APOE is an apolipoprotein, a protein associating with lipid particles, that mainly functions in lipoprotein-mediated lipid transport between organs via the plasma and interstitial fluids. APOE is a core component of plasma lipoproteins and is involved in their production, conversion and clearance. Apolipoproteins are amphipathic molecules that interact both with lipids of the lipoprotein particle core and the aqueous environment of the plasma. As such, APOE associates with chylomicrons, chylomicron remnants, very low density lipoproteins (VLDL) and intermediate density lipoproteins (IDL) but shows a preferential binding to high-density lipoproteins (HDL). It also binds a wide range of cellular receptors including the LDL receptor/LDLR, the LDL receptor-related proteins LRP1, LRP2 and LRP8 and the very low-density lipoprotein receptor/VLDLR that mediate the cellular uptake of the APOE-containing lipoprotein particles. Finally, APOE also has a heparin-binding activity and binds heparan-sulfate proteoglycans on the surface of cells, a property that supports the capture and the receptor-mediated uptake of APOE-containing lipoproteins by cells. A main function of APOE is to mediate lipoprotein clearance through the uptake of chylomicrons, VLDLs, and HDLs by hepatocytes. APOE is also involved in the biosynthesis by the liver of VLDLs as well as their uptake by peripheral tissues ensuring the delivery of triglycerides and energy storage in muscle, heart and adipose tissues. By participating in the lipoprotein-mediated distribution of lipids among tissues, APOE plays a critical role in plasma and tissues lipid homeostasis. APOE is also involved in two steps of reverse cholesterol transport, the HDLs-mediated transport of cholesterol from peripheral tissues to the liver, and thereby plays an important role in cholesterol homeostasis. First, it is functionally associated with ABCA1 in the biogenesis of HDLs in tissues. Second, it is enriched in circulating HDLs and mediates their uptake by hepatocytes. APOE also plays an important role in lipid transport in the central nervous system, regulating neuron survival and sprouting. The polypeptide is Apolipoprotein E (Apoe) (Arvicanthis niloticus (African grass rat)).